Reading from the N-terminus, the 383-residue chain is Lipoyl synthase, mitochondrial (383 aa).

The transit peptide at Met-1–Leu-19 directs the protein to the mitochondrion. The segment at Asp-69–Gly-97 is disordered. The [4Fe-4S] cluster site is built by Cys-116, Cys-121, Cys-127, Cys-147, Cys-151, Cys-154, and Ser-362. One can recognise a Radical SAM core domain in the interval Lys-132–Leu-351.

Belongs to the radical SAM superfamily. Lipoyl synthase family. Requires [4Fe-4S] cluster as cofactor.

The protein resides in the mitochondrion. It catalyses the reaction [[Fe-S] cluster scaffold protein carrying a second [4Fe-4S](2+) cluster] + N(6)-octanoyl-L-lysyl-[protein] + 2 oxidized [2Fe-2S]-[ferredoxin] + 2 S-adenosyl-L-methionine + 4 H(+) = [[Fe-S] cluster scaffold protein] + N(6)-[(R)-dihydrolipoyl]-L-lysyl-[protein] + 4 Fe(3+) + 2 hydrogen sulfide + 2 5'-deoxyadenosine + 2 L-methionine + 2 reduced [2Fe-2S]-[ferredoxin]. It functions in the pathway protein modification; protein lipoylation via endogenous pathway; protein N(6)-(lipoyl)lysine from octanoyl-[acyl-carrier-protein]: step 2/2. Catalyzes the radical-mediated insertion of two sulfur atoms into the C-6 and C-8 positions of the octanoyl moiety bound to the lipoyl domains of lipoate-dependent enzymes, thereby converting the octanoylated domains into lipoylated derivatives. In Phytophthora infestans (strain T30-4) (Potato late blight agent), this protein is Lipoyl synthase, mitochondrial.